A 142-amino-acid polypeptide reads, in one-letter code: Large ribosomal subunit protein uL13 (142 aa).

It belongs to the universal ribosomal protein uL13 family. In terms of assembly, part of the 50S ribosomal subunit.

This protein is one of the early assembly proteins of the 50S ribosomal subunit, although it is not seen to bind rRNA by itself. It is important during the early stages of 50S assembly. The polypeptide is Large ribosomal subunit protein uL13 (Shigella dysenteriae serotype 1 (strain Sd197)).